A 211-amino-acid chain; its full sequence is Pyridoxine/pyridoxamine 5'-phosphate oxidase (211 aa).

Substrate is bound by residues 7–10 (RREY) and Lys-65. Residues 60–65 (RTVLLK), 75–76 (YT), Arg-81, Lys-82, and Gln-104 contribute to the FMN site. 3 residues coordinate substrate: Tyr-122, Arg-126, and Ser-130. FMN contacts are provided by residues 139 to 140 (QS) and Trp-184. Residue 190–192 (RLH) participates in substrate binding. Arg-194 contributes to the FMN binding site.

It belongs to the pyridoxamine 5'-phosphate oxidase family. Homodimer. FMN serves as cofactor.

It carries out the reaction pyridoxamine 5'-phosphate + O2 + H2O = pyridoxal 5'-phosphate + H2O2 + NH4(+). The catalysed reaction is pyridoxine 5'-phosphate + O2 = pyridoxal 5'-phosphate + H2O2. Its pathway is cofactor metabolism; pyridoxal 5'-phosphate salvage; pyridoxal 5'-phosphate from pyridoxamine 5'-phosphate: step 1/1. It participates in cofactor metabolism; pyridoxal 5'-phosphate salvage; pyridoxal 5'-phosphate from pyridoxine 5'-phosphate: step 1/1. In terms of biological role, catalyzes the oxidation of either pyridoxine 5'-phosphate (PNP) or pyridoxamine 5'-phosphate (PMP) into pyridoxal 5'-phosphate (PLP). The protein is Pyridoxine/pyridoxamine 5'-phosphate oxidase of Aeromonas hydrophila subsp. hydrophila (strain ATCC 7966 / DSM 30187 / BCRC 13018 / CCUG 14551 / JCM 1027 / KCTC 2358 / NCIMB 9240 / NCTC 8049).